The sequence spans 147 residues: 3-dehydroquinate dehydratase (147 aa).

The Proton acceptor role is filled by Tyr-23. Substrate contacts are provided by Asn-74, His-80, and Asp-87. Residue His-100 is the Proton donor of the active site. Substrate-binding positions include 101–102 and Arg-111; that span reads LS.

The protein belongs to the type-II 3-dehydroquinase family. In terms of assembly, homododecamer.

It catalyses the reaction 3-dehydroquinate = 3-dehydroshikimate + H2O. It functions in the pathway metabolic intermediate biosynthesis; chorismate biosynthesis; chorismate from D-erythrose 4-phosphate and phosphoenolpyruvate: step 3/7. Functionally, catalyzes a trans-dehydration via an enolate intermediate. This Clostridium botulinum (strain Okra / Type B1) protein is 3-dehydroquinate dehydratase.